A 191-amino-acid chain; its full sequence is dTTP/UTP pyrophosphatase (191 aa).

Catalysis depends on Asp64, which acts as the Proton acceptor.

The protein belongs to the Maf family. YhdE subfamily. It depends on a divalent metal cation as a cofactor.

The protein resides in the cytoplasm. The enzyme catalyses dTTP + H2O = dTMP + diphosphate + H(+). It catalyses the reaction UTP + H2O = UMP + diphosphate + H(+). Functionally, nucleoside triphosphate pyrophosphatase that hydrolyzes dTTP and UTP. May have a dual role in cell division arrest and in preventing the incorporation of modified nucleotides into cellular nucleic acids. In Thermosipho africanus (strain TCF52B), this protein is dTTP/UTP pyrophosphatase.